We begin with the raw amino-acid sequence, 291 residues long: 4-diphosphocytidyl-2-C-methyl-D-erythritol kinase (291 aa).

Lys10 is an active-site residue. 94–104 (PVSAGLAGGSS) contacts ATP. Asp136 is an active-site residue.

It belongs to the GHMP kinase family. IspE subfamily.

The enzyme catalyses 4-CDP-2-C-methyl-D-erythritol + ATP = 4-CDP-2-C-methyl-D-erythritol 2-phosphate + ADP + H(+). Its pathway is isoprenoid biosynthesis; isopentenyl diphosphate biosynthesis via DXP pathway; isopentenyl diphosphate from 1-deoxy-D-xylulose 5-phosphate: step 3/6. Functionally, catalyzes the phosphorylation of the position 2 hydroxy group of 4-diphosphocytidyl-2C-methyl-D-erythritol. This Listeria innocua serovar 6a (strain ATCC BAA-680 / CLIP 11262) protein is 4-diphosphocytidyl-2-C-methyl-D-erythritol kinase.